Here is an 833-residue protein sequence, read N- to C-terminus: MTRSPFRRLVFGTLRRLLYLWVRSETINQSSFTLNLDRSRPVFYALQSPSISDLAVIDTECRKAGLPRPVLSVAVGNLIEPAAFFYLTPSPDWLGRQDKRGAPPTLERVVAAVSQNPGEDAQIIPVSVFWGQSPDRESSAWKLLFADSWAVTGRLRRLVSILILGRKTRVQFSAPIHMRELVGENKGYELTLRMTQRLLRVHFRNLKSAVIGPDVSHRRTVVKGLLDEPLVKQAIIEEAEREHITQEKARERALSYGNEIASDYTYSVIRFMEVVLSWFWNKIYDGIKVSHIEGVQEVAPGHEVIYVPCHRSHIDYLLLSYLLFRNGLTPPHIAAGINLNMPVVGGLLRRGGAFFMRRTFKGNPLYTAVFTEYLHTLFIKGFPVEYFVEGGRSRTGRMLQPKTGMLAITLRSFLRNSRMPIVFIPVYIGYERVLEGRTYLGELRGATKKKESIFDIFKVIGALKQRFGQVSVNFGAPIKLAEFLDGEQPDWREQQLDPQFRPEWLSETTHRLGERVAQHLNEAAAVNPMNLVAVALLSTQRLALDDQAMERVLDLYLTLLRAVPYSPHTTLPEGDGRSLIEHVKGMDLLAEQKDALGKILYLNEQNAVLMTYYRNNVLHIFALPSLLASFFQSSSRMTREQILRYTRALYPFLQSELFIRWPLNELDDVVDQWLAAFVEQGLLRFKKDAYVRPEPSSREFVLLTLLSRAIAQTLQRFYMAIALLLNSGQNTLSPEQLEDLCTVMAQRLSILHGLNAPEFFDKSLFRHFIQTLLDLGVLRKDSAGKLSYHPMLGELAEGAAKRVLPAEIRLSIRQVALHSNEEEQDVGTDQGAA.

Positions 309 to 314 (CHRSHI) match the HXXXXD motif motif.

Belongs to the GPAT/DAPAT family.

The protein localises to the cell inner membrane. The enzyme catalyses sn-glycerol 3-phosphate + an acyl-CoA = a 1-acyl-sn-glycero-3-phosphate + CoA. The protein operates within phospholipid metabolism; CDP-diacylglycerol biosynthesis; CDP-diacylglycerol from sn-glycerol 3-phosphate: step 1/3. This Pseudomonas syringae pv. syringae (strain B728a) protein is Glycerol-3-phosphate acyltransferase.